The primary structure comprises 237 residues: Redox-sensing transcriptional repressor Rex (237 aa).

A DNA-binding region (H-T-H motif) is located at residues 45–84; sequence LYYRELHRLLAAGESSTNSRDLGAMVNVSPAVVRRDLSSI. Residue 119 to 124 coordinates NAD(+); it reads GVGSLG.

Belongs to the transcriptional regulatory Rex family. As to quaternary structure, homodimer.

The protein resides in the cytoplasm. Functionally, modulates transcription in response to changes in cellular NADH/NAD(+) redox state. In Rhodopirellula baltica (strain DSM 10527 / NCIMB 13988 / SH1), this protein is Redox-sensing transcriptional repressor Rex.